Consider the following 224-residue polypeptide: UPF0758 protein RSc2444 (224 aa).

An MPN domain is found at threonine 102–methionine 224. Residues histidine 173, histidine 175, and aspartate 186 each coordinate Zn(2+). A JAMM motif motif is present at residues histidine 173–aspartate 186.

Belongs to the UPF0758 family.

This chain is UPF0758 protein RSc2444, found in Ralstonia nicotianae (strain ATCC BAA-1114 / GMI1000) (Ralstonia solanacearum).